The primary structure comprises 179 residues: Phospholipase A2 (179 aa).

An N-terminal signal peptide occupies residues 1-21 (MHALRSSVLALWLCLHVSVRA). A propeptide spanning residues 22 to 39 (WMTYRSANGLDEYEPEDR) is cleaved from the precursor. 3 residues coordinate Ca(2+): Trp-47, Gly-49, and Gly-51. 5 cysteine pairs are disulfide-bonded: Cys-48/Cys-70, Cys-69/Cys-109, Cys-76/Cys-102, Cys-100/Cys-133, and Cys-142/Cys-150. His-73 is a catalytic residue. Asp-74 serves as a coordination point for Ca(2+). The active site involves Asp-103.

Belongs to the phospholipase A2 family. Group III subfamily. Ca(2+) serves as cofactor. As to expression, expressed by the venom gland.

Its subcellular location is the secreted. It catalyses the reaction a 1,2-diacyl-sn-glycero-3-phosphocholine + H2O = a 1-acyl-sn-glycero-3-phosphocholine + a fatty acid + H(+). In terms of biological role, may potentiate Xylotoxin(1)-Xa1a DRG activation and cell lysis, since the orthologous A.mellifera PA2 potentiates Xylotoxin(1)-Xa1a DRG activation and cell lysis. In vivo, intraplantar injection in mice may potentiate spontaneous pain behaviors and paw swelling caused by Xylotoxin(1)-Xa1a, since the orthologous A.mellifera PA2 shows this effect. PLA2 catalyzes the calcium-dependent hydrolysis of the 2-acyl groups in 3-sn-phosphoglycerides. The polypeptide is Phospholipase A2 (Xylocopa aruana (Great carpenter bee)).